A 306-amino-acid polypeptide reads, in one-letter code: 26S proteasome regulatory subunit RPN11 (306 aa).

Positions 27-162 (VYISSIALLK…IDAFRLIDTG (136 aa)) constitute an MPN domain. Zn(2+) contacts are provided by H109, H111, and D122. The short motif at 109 to 122 (HSHPGFGCWLSSVD) is the JAMM motif element.

This sequence belongs to the peptidase M67A family.

Its function is as follows. Acts as a regulatory subunit of the 26 proteasome which is involved in the ATP-dependent degradation of ubiquitinated proteins. The protein is 26S proteasome regulatory subunit RPN11 (RPN11) of Candida glabrata (strain ATCC 2001 / BCRC 20586 / JCM 3761 / NBRC 0622 / NRRL Y-65 / CBS 138) (Yeast).